Here is an 89-residue protein sequence, read N- to C-terminus: UPF0335 protein RPE_4107 (89 aa).

The protein belongs to the UPF0335 family.

In Rhodopseudomonas palustris (strain BisA53), this protein is UPF0335 protein RPE_4107.